The following is a 72-amino-acid chain: Translation initiation factor IF-1 (72 aa).

Positions 1–72 constitute an S1-like domain; the sequence is MAREDLIEVE…SRGRITYRKK (72 aa).

This sequence belongs to the IF-1 family. In terms of assembly, component of the 30S ribosomal translation pre-initiation complex which assembles on the 30S ribosome in the order IF-2 and IF-3, IF-1 and N-formylmethionyl-tRNA(fMet); mRNA recruitment can occur at any time during PIC assembly.

The protein localises to the cytoplasm. In terms of biological role, one of the essential components for the initiation of protein synthesis. Stabilizes the binding of IF-2 and IF-3 on the 30S subunit to which N-formylmethionyl-tRNA(fMet) subsequently binds. Helps modulate mRNA selection, yielding the 30S pre-initiation complex (PIC). Upon addition of the 50S ribosomal subunit IF-1, IF-2 and IF-3 are released leaving the mature 70S translation initiation complex. The protein is Translation initiation factor IF-1 of Acholeplasma laidlawii (strain PG-8A).